A 491-amino-acid polypeptide reads, in one-letter code: Glutamyl-tRNA(Gln) amidotransferase subunit A (491 aa).

Active-site charge relay system residues include K78 and S158. S182 acts as the Acyl-ester intermediate in catalysis.

The protein belongs to the amidase family. GatA subfamily. As to quaternary structure, heterotrimer of A, B and C subunits.

It catalyses the reaction L-glutamyl-tRNA(Gln) + L-glutamine + ATP + H2O = L-glutaminyl-tRNA(Gln) + L-glutamate + ADP + phosphate + H(+). Allows the formation of correctly charged Gln-tRNA(Gln) through the transamidation of misacylated Glu-tRNA(Gln) in organisms which lack glutaminyl-tRNA synthetase. The reaction takes place in the presence of glutamine and ATP through an activated gamma-phospho-Glu-tRNA(Gln). In Nitrobacter hamburgensis (strain DSM 10229 / NCIMB 13809 / X14), this protein is Glutamyl-tRNA(Gln) amidotransferase subunit A.